Consider the following 543-residue polypeptide: T-complex protein 1 subunit eta (543 aa).

Methionine 1 carries the post-translational modification N-acetylmethionine. Position 41 (glycine 41) interacts with ADP. Glycine 41 serves as a coordination point for ATP. Residue lysine 67 is modified to N6-acetyllysine. Aspartate 92 contacts Mg(2+). 6 residues coordinate ADP: glycine 93, threonine 94, threonine 95, serine 96, serine 164, and serine 165. Glycine 93 contacts ATP. Serine 96 provides a ligand contact to ATP. Residues lysine 250 and lysine 320 each carry the N6-acetyllysine modification. Residues arginine 398 and glycine 409 each contribute to the ATP site. Residue glycine 409 coordinates ADP. Lysine 430 is covalently cross-linked (Glycyl lysine isopeptide (Lys-Gly) (interchain with G-Cter in SUMO2)). Residues glutamate 494 and arginine 499 each coordinate ADP. Arginine 499 is an ATP binding site. The segment at 524-543 is disordered; it reads RSTVDASPAAGRGRGRGRLH. Arginine 535 is modified (omega-N-methylarginine).

This sequence belongs to the TCP-1 chaperonin family. In terms of assembly, component of the chaperonin-containing T-complex (TRiC), a hexadecamer composed of two identical back-to-back stacked rings enclosing a protein folding chamber. Each ring is made up of eight different subunits: TCP1/CCT1, CCT2, CCT3, CCT4, CCT5, CCT6A/CCT6, CCT7, CCT8. Interacts with PACRG. Interacts with DLEC1.

Its subcellular location is the cytoplasm. The catalysed reaction is ATP + H2O = ADP + phosphate + H(+). Its function is as follows. Component of the chaperonin-containing T-complex (TRiC), a molecular chaperone complex that assists the folding of actin, tubulin and other proteins upon ATP hydrolysis. The TRiC complex mediates the folding of WRAP53/TCAB1, thereby regulating telomere maintenance. The chain is T-complex protein 1 subunit eta (CCT7) from Bos taurus (Bovine).